The chain runs to 309 residues: Protein RTM1 (309 aa).

7 helical membrane passes run 22–42, 83–103, 119–139, 162–182, 193–213, 233–253, and 278–298; these read AIAL…QVVW, TFSA…GYIA, IQAV…YMLF, FFVF…GLMA, LITA…INEF, WWFL…RSIV, and AVPM…GNIF.

The protein belongs to the lipid-translocating exporter (LTE) (TC 9.A.26.1) family.

Its subcellular location is the membrane. In terms of biological role, confers resistance to molasses (to a particular toxic element present in some molasses). This is Protein RTM1 (RTM1) from Saccharomyces cerevisiae (Baker's yeast).